The sequence spans 358 residues: Alanine racemase (358 aa).

The active-site Proton acceptor; specific for D-alanine is the Lys-34. Lys-34 is modified (N6-(pyridoxal phosphate)lysine). Residue Arg-129 participates in substrate binding. Catalysis depends on Tyr-254, which acts as the Proton acceptor; specific for L-alanine. A substrate-binding site is contributed by Met-302.

It belongs to the alanine racemase family. Pyridoxal 5'-phosphate serves as cofactor.

The catalysed reaction is L-alanine = D-alanine. Its pathway is amino-acid biosynthesis; D-alanine biosynthesis; D-alanine from L-alanine: step 1/1. Functionally, catalyzes the interconversion of L-alanine and D-alanine. May also act on other amino acids. The chain is Alanine racemase (alr) from Vibrio atlanticus (strain LGP32) (Vibrio splendidus (strain Mel32)).